The following is a 561-amino-acid chain: 4-coumarate--CoA ligase 3 (561 aa).

ATP is bound by residues S213, S214, G215, T216, T217, and K221. Y263 and S267 together coordinate (E)-4-coumaroyl-AMP. Position 284 (K284) interacts with CoA. Residues 286-355 (EIGALLDLIQ…RRLPQAILGQ (70 aa)) form an SBD1 region. Positions 333, 355, 356, 360, and 368 each coordinate (E)-4-coumaroyl-AMP. ATP is bound by residues Q355, G356, and T360. The segment at 356-423 (GYGMTEAGPV…IRGQQIMKEY (68 aa)) is SBD2. Residues D444 and R459 each coordinate ATP. Positions 461 and 465 each coordinate (E)-4-coumaroyl-AMP. CoA-binding residues include K467 and G468. An ATP-binding site is contributed by K550.

This sequence belongs to the ATP-dependent AMP-binding enzyme family. Requires Mg(2+) as cofactor. In terms of tissue distribution, preferentially expressed in leaves, flowers and siliques.

It catalyses the reaction (E)-4-coumarate + ATP + CoA = (E)-4-coumaroyl-CoA + AMP + diphosphate. The enzyme catalyses (E)-caffeate + ATP + CoA = (E)-caffeoyl-CoA + AMP + diphosphate. It carries out the reaction (E)-ferulate + ATP + CoA = (E)-feruloyl-CoA + AMP + diphosphate. The catalysed reaction is (E)-4-coumarate + ATP + H(+) = (E)-4-coumaroyl-AMP + diphosphate. It catalyses the reaction (E)-4-coumaroyl-AMP + CoA = (E)-4-coumaroyl-CoA + AMP + H(+). The enzyme catalyses (E)-caffeate + ATP + H(+) = (E)-caffeoyl-AMP + diphosphate. It carries out the reaction (E)-caffeoyl-AMP + CoA = (E)-caffeoyl-CoA + AMP + H(+). The catalysed reaction is (E)-ferulate + ATP + H(+) = (E)-feruloyl-AMP + diphosphate. It catalyses the reaction (E)-feruloyl-AMP + CoA = (E)-feruloyl-CoA + AMP + H(+). Its pathway is phytoalexin biosynthesis; 3,4',5-trihydroxystilbene biosynthesis; 3,4',5-trihydroxystilbene from trans-4-coumarate: step 1/2. Its function is as follows. Produces CoA thioesters of a variety of hydroxy- and methoxy-substituted cinnamic acids, which are used to synthesize several phenylpropanoid-derived compounds, including anthocyanins, flavonoids, isoflavonoids, coumarins, lignin, suberin and wall-bound phenolics. Follows a two-step reaction mechanism, wherein the carboxylate substrate first undergoes adenylation by ATP, followed by a thioesterification in the presence of CoA to yield the final CoA thioesters. The protein is 4-coumarate--CoA ligase 3 of Arabidopsis thaliana (Mouse-ear cress).